Reading from the N-terminus, the 205-residue chain is MSKRLESKYKINRRLGVNLWGRAKSPVNRREYGPGQHGQRRKQKPSDFSIQLMAKQKLKGYYGNISEKQFRKYYDEAVRRKGDTSENLIGLLERRLDAVVYRLKFAITPFASRQFISHGHVTVNGKKVNIPSYLVKEGDVIEVRDSSKQLAIVLDAVQTGERDTPEYVEVDHRQMKGTFLRTPVLSDVPYPVQMEPNLVVEFYSR.

Residues 26 to 46 form a disordered region; sequence PVNRREYGPGQHGQRRKQKPS. The 64-residue stretch at 94-157 folds into the S4 RNA-binding domain; sequence RRLDAVVYRL…KQLAIVLDAV (64 aa).

This sequence belongs to the universal ribosomal protein uS4 family. In terms of assembly, part of the 30S ribosomal subunit. Contacts protein S5. The interaction surface between S4 and S5 is involved in control of translational fidelity.

In terms of biological role, one of the primary rRNA binding proteins, it binds directly to 16S rRNA where it nucleates assembly of the body of the 30S subunit. Functionally, with S5 and S12 plays an important role in translational accuracy. The polypeptide is Small ribosomal subunit protein uS4 (Gluconobacter oxydans (strain 621H) (Gluconobacter suboxydans)).